A 503-amino-acid chain; its full sequence is ATP synthase subunit beta (503 aa).

Residue 157-164 coordinates ATP; it reads GGAGVGKT.

This sequence belongs to the ATPase alpha/beta chains family. In terms of assembly, F-type ATPases have 2 components, CF(1) - the catalytic core - and CF(0) - the membrane proton channel. CF(1) has five subunits: alpha(3), beta(3), gamma(1), delta(1), epsilon(1). CF(0) has three main subunits: a(1), b(2) and c(9-12). The alpha and beta chains form an alternating ring which encloses part of the gamma chain. CF(1) is attached to CF(0) by a central stalk formed by the gamma and epsilon chains, while a peripheral stalk is formed by the delta and b chains.

Its subcellular location is the cell membrane. The enzyme catalyses ATP + H2O + 4 H(+)(in) = ADP + phosphate + 5 H(+)(out). In terms of biological role, produces ATP from ADP in the presence of a proton gradient across the membrane. The catalytic sites are hosted primarily by the beta subunits. This Christiangramia forsetii (strain DSM 17595 / CGMCC 1.15422 / KT0803) (Gramella forsetii) protein is ATP synthase subunit beta.